Reading from the N-terminus, the 186-residue chain is UPF0398 protein LCA_0919 (186 aa).

Belongs to the UPF0398 family.

The chain is UPF0398 protein LCA_0919 from Latilactobacillus sakei subsp. sakei (strain 23K) (Lactobacillus sakei subsp. sakei).